A 201-amino-acid chain; its full sequence is Translation initiation factor IF-3 (201 aa).

Residues 167–201 are disordered; sequence PHRGAKTRARARHPGEPAGGPPPKPTAGDSKAAPN. A compositionally biased stretch (basic residues) spans 169–178; that stretch reads RGAKTRARAR.

The protein belongs to the IF-3 family. In terms of assembly, monomer.

The protein localises to the cytoplasm. Functionally, IF-3 binds to the 30S ribosomal subunit and shifts the equilibrium between 70S ribosomes and their 50S and 30S subunits in favor of the free subunits, thus enhancing the availability of 30S subunits on which protein synthesis initiation begins. The chain is Translation initiation factor IF-3 from Mycobacterium bovis (strain ATCC BAA-935 / AF2122/97).